The sequence spans 879 residues: Leucine--tRNA ligase (879 aa).

Residues 45 to 55 (PYPSGALHMGH) carry the 'HIGH' region motif. Residues 637-641 (KMSKS) carry the 'KMSKS' region motif. An ATP-binding site is contributed by Lys-640.

It belongs to the class-I aminoacyl-tRNA synthetase family.

Its subcellular location is the cytoplasm. The catalysed reaction is tRNA(Leu) + L-leucine + ATP = L-leucyl-tRNA(Leu) + AMP + diphosphate. This chain is Leucine--tRNA ligase, found in Xylella fastidiosa (strain M23).